A 189-amino-acid chain; its full sequence is Threonylcarbamoyl-AMP synthase (189 aa).

Residues 9–189 form the YrdC-like domain; the sequence is ASAQRKLSVY…IDGETGKRLR (181 aa).

This sequence belongs to the SUA5 family. TsaC subfamily.

The protein resides in the cytoplasm. It catalyses the reaction L-threonine + hydrogencarbonate + ATP = L-threonylcarbamoyladenylate + diphosphate + H2O. Required for the formation of a threonylcarbamoyl group on adenosine at position 37 (t(6)A37) in tRNAs that read codons beginning with adenine. Catalyzes the conversion of L-threonine, HCO(3)(-)/CO(2) and ATP to give threonylcarbamoyl-AMP (TC-AMP) as the acyladenylate intermediate, with the release of diphosphate. The polypeptide is Threonylcarbamoyl-AMP synthase (Neisseria gonorrhoeae (strain ATCC 700825 / FA 1090)).